The primary structure comprises 317 residues: Secreted mono- and diacylglycerol lipase 3 (317 aa).

An N-terminal signal peptide occupies residues 1-29 (MMFADDLVRMAVLRFITVALAAITNVANA). C61 and C310 form a disulfide bridge. N-linked (GlcNAc...) asparagine glycosylation occurs at N108. S175 (nucleophile) is an active-site residue. N-linked (GlcNAc...) asparagine glycosylation is present at N194. D234 is a catalytic residue. The N-linked (GlcNAc...) asparagine glycan is linked to N258. H294 is a catalytic residue.

It belongs to the AB hydrolase superfamily. Lipase family. Class 3 subfamily.

It is found in the secreted. It catalyses the reaction a monoacylglycerol + H2O = glycerol + a fatty acid + H(+). It carries out the reaction a diacylglycerol + H2O = a monoacylglycerol + a fatty acid + H(+). Secreted mono- and diacylglycerol lipase involved in plant virulence. Has a substrate preference for p-nitrophenyl esters with a carbon chain length of C10 (p-nitrophenyl caprate). This Gibberella zeae (strain ATCC MYA-4620 / CBS 123657 / FGSC 9075 / NRRL 31084 / PH-1) (Wheat head blight fungus) protein is Secreted mono- and diacylglycerol lipase 3.